The sequence spans 873 residues: Leucine--tRNA ligase (873 aa).

A 'HIGH' region motif is present at residues 41-51 (PYPSGRIHMGH). The 'KMSKS' region motif lies at 645-649 (KMSKS). Lys648 provides a ligand contact to ATP.

It belongs to the class-I aminoacyl-tRNA synthetase family.

The protein resides in the cytoplasm. It carries out the reaction tRNA(Leu) + L-leucine + ATP = L-leucyl-tRNA(Leu) + AMP + diphosphate. In Cereibacter sphaeroides (strain ATCC 17025 / ATH 2.4.3) (Rhodobacter sphaeroides), this protein is Leucine--tRNA ligase.